The sequence spans 233 residues: Antigenic membrane protein (233 aa).

An N-terminal signal peptide occupies residues 1 to 32 (MQNQKNQKSLVAKVLVLFAAVALMFVGVQVFA). The helical transmembrane segment at 206–226 (FLTLVAVVVVAAVAGGVFFFV) threads the bilayer.

The protein resides in the cell membrane. This Onion yellows phytoplasma (strain OY-M) protein is Antigenic membrane protein (amp).